Consider the following 309-residue polypeptide: Probable 3-hydroxyacyl-CoA dehydrogenase B0272.3 (309 aa).

This sequence belongs to the 3-hydroxyacyl-CoA dehydrogenase family. As to quaternary structure, homodimer.

Its subcellular location is the mitochondrion matrix. It catalyses the reaction a (3S)-3-hydroxyacyl-CoA + NAD(+) = a 3-oxoacyl-CoA + NADH + H(+). Its pathway is lipid metabolism; fatty acid beta-oxidation. This chain is Probable 3-hydroxyacyl-CoA dehydrogenase B0272.3, found in Caenorhabditis elegans.